Here is a 73-residue protein sequence, read N- to C-terminus: Translation initiation factor IF-1 (73 aa).

The region spanning 1–73 (MDIKEEAIET…TKGRIVYREK (73 aa)) is the S1-like domain.

It belongs to the IF-1 family. As to quaternary structure, component of the 30S ribosomal translation pre-initiation complex which assembles on the 30S ribosome in the order IF-2 and IF-3, IF-1 and N-formylmethionyl-tRNA(fMet); mRNA recruitment can occur at any time during PIC assembly.

It is found in the cytoplasm. One of the essential components for the initiation of protein synthesis. Stabilizes the binding of IF-2 and IF-3 on the 30S subunit to which N-formylmethionyl-tRNA(fMet) subsequently binds. Helps modulate mRNA selection, yielding the 30S pre-initiation complex (PIC). Upon addition of the 50S ribosomal subunit IF-1, IF-2 and IF-3 are released leaving the mature 70S translation initiation complex. The polypeptide is Translation initiation factor IF-1 (Borreliella afzelii (strain PKo) (Borrelia afzelii)).